Consider the following 1202-residue polypeptide: Metabotropic glycine receptor (1202 aa).

The signal sequence occupies residues 1-24 (MGAMAYSLLLCLLLAHLGLGEVGA). Positions 25–62 (SLDPSERPDSSRERTSRGKQHGQQLPRASAPDPSIPWS) are disordered. At 25-417 (SLDPSERPDS…CFVQEDKYLR (393 aa)) the chain is on the extracellular side. Basic and acidic residues predominate over residues 28-40 (PSERPDSSRERTS). Residues 85–281 (YLYTGDFHQL…CENGSYKPGW (197 aa)) form a cache-like region region. 2 N-linked (GlcNAc...) asparagine glycosylation sites follow: N98 and N143. Residues C99 and C272 are joined by a disulfide bond. 2 residues coordinate glycine: S172 and R173. Residue N215 is glycosylated (N-linked (GlcNAc...) asparagine). Residues 234–253 (LHRRGSNQGPRGLGHSWRRR) form a disordered region. E271 lines the glycine pocket. An N-linked (GlcNAc...) asparagine glycan is attached at N274. D307 serves as a coordination point for glycine. Residue N333 is glycosylated (N-linked (GlcNAc...) asparagine). A helical transmembrane segment spans residues 418 to 439 (LAIISFQALCMLLDFVSMLVVY). Over 440–451 (HFRKAKSIRASG) the chain is Cytoplasmic. Residues 452–474 (LILLETILFGSLLLYFPVVILYF) traverse the membrane as a helical segment. The Extracellular segment spans residues 475–478 (EPST). Residues 479–501 (FRCILLRWVRLLGFATVYGTVTL) form a helical membrane-spanning segment. Residues C481 and C573 are joined by a disulfide bond. Residues 502-525 (KLHRVLKVFLSRTAQRIPYMTGGR) lie on the Cytoplasmic side of the membrane. Residues 526-547 (VMRMLAVIVLVVFWFLVGWTSS) form a helical membrane-spanning segment. Residues 548-576 (MCQNLERDILLVGQGQTSDNLTFNMCLID) are Extracellular-facing. The chain crosses the membrane as a helical span at residues 577-597 (RWDYMTAVAEFLFLLWGIYLC). The Cytoplasmic portion of the chain corresponds to 598-611 (YAVRTVPSAFHEPR). A helical transmembrane segment spans residues 612 to 633 (YMAVAVHNELIITAIFHTIRFV). Residues 634-642 (LASRLQPDW) are Extracellular-facing. The chain crosses the membrane as a helical span at residues 643-664 (MLMLYFAHTHLTVTVTIGLLLI). Over 665–1202 (PKFSHSSNNP…SASKIPGPRK (538 aa)) the chain is Cytoplasmic. S694, S705, and S708 each carry phosphoserine. Disordered stretches follow at residues 757–899 (RITE…TSML) and 914–995 (LGLA…QIKD). Composition is skewed to basic and acidic residues over residues 769-781 (CSKE…DHSA) and 819-828 (STYDHVRDQT). A Glycyl lysine isopeptide (Lys-Gly) (interchain with G-Cter in ubiquitin) cross-link involves residue K774. A compositionally biased stretch (low complexity) spans 845–856 (ENSTLESLSSKK). At S865 the chain carries Phosphoserine. Residues 925 to 943 (MEDRAKSQKPQPKDRETNR) show a composition bias toward basic and acidic residues. 2 stretches are compositionally biased toward polar residues: residues 944-958 (KYSN…PNSN) and 975-994 (QRVN…TQIK). The residue at position 946 (S946) is a Phosphoserine. The VCPWE motif 1 motif lies at 1002-1006 (VCPWE). S1061 carries the post-translational modification Phosphoserine. The VCPWE motif 2 signature appears at 1067 to 1071 (VCPWE). S1076 is subject to Phosphoserine. 2 stretches are compositionally biased toward polar residues: residues 1132–1144 (QMGD…SSSV) and 1151–1162 (CISSNNSPQPLT). The interval 1132 to 1162 (QMGDQEKQTSSSVDIIPGSCISSNNSPQPLT) is disordered. Residues 1167 to 1171 (VCPWE) carry the VCPWE motif 3 motif.

The protein belongs to the G-protein coupled receptor 3 family. Homodimer. Associates with the RGS7-GNB5 complex, promoting its localization to the cell membrane and regulating its GTPase activator activity. Interacts (via VCPWE motifs) with GNAO1. Interacts with GPC4. Interacts with EGFLAM.

It localises to the cell membrane. The protein localises to the postsynaptic cell membrane. Its subcellular location is the presynaptic cell membrane. The protein resides in the nucleus. In terms of biological role, metabotropic receptor for glycine that controls synapse formation and function in the brain. Acts as an atypical G-protein coupled receptor that recruits and regulates the RGS7-GNB5 complex instead of activating G proteins. In absence of glycine ligand, promotes the GTPase activator activity of RGS7, increasing the GTPase activity of G protein alpha subunits, thereby driving them into their inactive GDP-bound form. Glycine-binding changes the conformation of the intracellular surface, inhibiting the GTPase activator activity of the RGS7-GNB5 complex, promoting G protein alpha subunits into their active GTP-bound form and regulating cAMP levels. Also able to bind taurine, a compound closely related to glycine, but with a two-fold lower affinity. Glycine receptor-dependent regulation of cAMP controls key ion channels, kinases and neurotrophic factors involved in neuronal excitability and synaptic transmission. Plays a pivotal role in regulating mood and cognition via its ability to regulate neuronal excitability in L2/L3 pyramidal neurons of the prefrontal cortex. Also involved in spatial learning by regulating hippocampal CA1 neuronal excitability. Acts as a synaptic organizer in the hippocampus, required for proper mossy fiber-CA3 neurocircuitry establishment, structure and function: induces presynaptic differentiation in contacting axons via its interaction with GPC4. In addition to glycine, may also act as a receptor for osteocalcin (BGLAP) hormone: osteocalcin-binding initiates a signaling response that prevents neuronal apoptosis in the hippocampus and regulates the synthesis of neurotransmitters. In Rattus norvegicus (Rat), this protein is Metabotropic glycine receptor.